The chain runs to 335 residues: Ferredoxin--NADP reductase (335 aa).

Asp-35, Gln-43, Tyr-48, Ala-88, Phe-122, Asp-287, and Ser-328 together coordinate FAD.

The protein belongs to the ferredoxin--NADP reductase type 2 family. Homodimer. It depends on FAD as a cofactor.

The catalysed reaction is 2 reduced [2Fe-2S]-[ferredoxin] + NADP(+) + H(+) = 2 oxidized [2Fe-2S]-[ferredoxin] + NADPH. This Thermus thermophilus (strain ATCC BAA-163 / DSM 7039 / HB27) protein is Ferredoxin--NADP reductase.